We begin with the raw amino-acid sequence, 121 residues long: Small ribosomal subunit protein bS6 (121 aa).

It belongs to the bacterial ribosomal protein bS6 family.

Its function is as follows. Binds together with bS18 to 16S ribosomal RNA. This Rickettsia felis (strain ATCC VR-1525 / URRWXCal2) (Rickettsia azadi) protein is Small ribosomal subunit protein bS6.